We begin with the raw amino-acid sequence, 471 residues long: Sulfate adenylyltransferase subunit 1 (471 aa).

The tr-type G domain maps to lysine 22–lysine 237. The interval glycine 31–serine 38 is G1. Glycine 31–serine 38 is a binding site for GTP. The segment at glycine 89–aspartate 93 is G2. Positions aspartate 110–glycine 113 are G3. Residues aspartate 110–histidine 114 and asparagine 165–aspartate 168 contribute to the GTP site. The G4 stretch occupies residues asparagine 165–aspartate 168. Residues serine 202–leucine 204 form a G5 region.

The protein belongs to the TRAFAC class translation factor GTPase superfamily. Classic translation factor GTPase family. CysN/NodQ subfamily. Heterodimer composed of CysD, the smaller subunit, and CysN.

The enzyme catalyses sulfate + ATP + H(+) = adenosine 5'-phosphosulfate + diphosphate. It participates in sulfur metabolism; hydrogen sulfide biosynthesis; sulfite from sulfate: step 1/3. In terms of biological role, with CysD forms the ATP sulfurylase (ATPS) that catalyzes the adenylation of sulfate producing adenosine 5'-phosphosulfate (APS) and diphosphate, the first enzymatic step in sulfur assimilation pathway. APS synthesis involves the formation of a high-energy phosphoric-sulfuric acid anhydride bond driven by GTP hydrolysis by CysN coupled to ATP hydrolysis by CysD. The protein is Sulfate adenylyltransferase subunit 1 of Saccharophagus degradans (strain 2-40 / ATCC 43961 / DSM 17024).